Here is a 235-residue protein sequence, read N- to C-terminus: MSDKPNNFPPLPRFIPLKPCFYQDFDTDIPDVHRTTAKRLYYLWMLNSITLGVNLIGCLAWLIGGGGATNFGLAFLWLILFTPCSYVCWFRPIYKAFKTDSSFNFMAFFFTFTGQLVISIIQAVGIPGWGVCGWIASISFFGTNVGSAVVMLIPTIMFTAVAVLSFVALTKVHRFYRGAGGSMSKAQEEWTTGAWKNPHVQQAAQNAAFGAAQGAMTQNEPQYSATPNYGYSNQM.

Residues 1-39 (MSDKPNNFPPLPRFIPLKPCFYQDFDTDIPDVHRTTAKR) lie on the Cytoplasmic side of the membrane. A helical membrane pass occupies residues 40–60 (LYYLWMLNSITLGVNLIGCLA). Over 61-67 (WLIGGGG) the chain is Extracellular. A helical transmembrane segment spans residues 68–88 (ATNFGLAFLWLILFTPCSYVC). Residues 89-102 (WFRPIYKAFKTDSS) lie on the Cytoplasmic side of the membrane. Residues 103 to 125 (FNFMAFFFTFTGQLVISIIQAVG) traverse the membrane as a helical segment. Residues 126–148 (IPGWGVCGWIASISFFGTNVGSA) lie on the Extracellular side of the membrane. A helical membrane pass occupies residues 149–169 (VVMLIPTIMFTAVAVLSFVAL). At 170 to 235 (TKVHRFYRGA…TPNYGYSNQM (66 aa)) the chain is on the cytoplasmic side.

The protein belongs to the SCAMP family. SCAMP5 subfamily.

It localises to the cell membrane. The protein localises to the golgi apparatus membrane. The protein resides in the golgi apparatus. It is found in the trans-Golgi network membrane. Its subcellular location is the recycling endosome membrane. It localises to the cytoplasmic vesicle. The protein localises to the secretory vesicle. The protein resides in the synaptic vesicle membrane. Its function is as follows. Required for the calcium-dependent exocytosis of signal sequence-containing cytokines. Probably acts in cooperation with the SNARE machinery. In Xenopus laevis (African clawed frog), this protein is Secretory carrier-associated membrane protein 5B (scamp5-b).